The primary structure comprises 691 residues: POU domain, class 6, transcription factor 2 (691 aa).

Disordered regions lie at residues 1–61, 188–297, and 435–461; these read MIAG…RGNT, QQQQ…LQLV, and GQAA…SALS. Residues 17–28 are compositionally biased toward basic and acidic residues; it reads MNAELRGEDKAA. Low complexity-rich tracts occupy residues 188 to 197 and 206 to 216; these read QQQQQQQQQQ and QHPQPASQAPP. Pro residues predominate over residues 217–237; that stretch reads QSQPTPPHQPPPASQQLPAPP. Over residues 238 to 272 the composition is skewed to low complexity; it reads AQLEQATQPQQHQPHSHPQNQTQNQPSPTQQSSSP. A compositionally biased stretch (polar residues) spans 437-447; it reads AATSHSPVRQA. Positions 448–458 are enriched in low complexity; the sequence is SSSSSSSSSSS. A POU-specific domain is found at 476–586; sequence VDGVNLEEIR…VLERWMAEAE (111 aa). Residues 607–666 constitute a DNA-binding region (homeobox); that stretch reads KRKRRTSFTPQALEILNAHFEKNTHPSGQEMTEIAEKLNYDREVVRVWFCNKRQALKNTI. Positions 670–691 are disordered; that stretch reads KQHEPTSAAPLEPLADSPEENC.

This sequence belongs to the POU transcription factor family. Class-6 subfamily. Expressed in kidney, heart, muscle, spleen and ovary, but not in lung.

The protein resides in the nucleus. Functionally, probable transcription factor likely to be involved in early steps in the differentiation of amacrine and ganglion cells. Recognizes and binds to the DNA sequence 5'-ATGCAAAT-3'. The protein is POU domain, class 6, transcription factor 2 (Pou6f2) of Mus musculus (Mouse).